The following is a 94-amino-acid chain: Small ubiquitin-related modifier 3-like (94 aa).

Lys-11 participates in a covalent cross-link: Glycyl lysine isopeptide (Lys-Gly) (interchain with G-Cter in SUMO). The Ubiquitin-like domain maps to Asp-15 to Gly-92. Gly-92 participates in a covalent cross-link: Glycyl lysine isopeptide (Gly-Lys) (interchain with K-? in acceptor proteins). Positions Ser-93–Cys-94 are excised as a propeptide.

The protein belongs to the ubiquitin family. SUMO subfamily. Interacts with sae2 and ube2i. Covalently attached to a number of proteins. In terms of processing, polymeric chains can be formed through Lys-11 cross-linking. Cleavage of precursor form by a sentrin-specific protease is necessary for function.

The protein localises to the cytoplasm. The protein resides in the nucleus. Its subcellular location is the PML body. Its function is as follows. Ubiquitin-like protein which can be covalently attached to target lysines either as a monomer or as a lysine-linked polymer. Does not seem to be involved in protein degradation and may function as an antagonist of ubiquitin in the degradation process. Plays a role in a number of cellular processes such as nuclear transport, DNA replication and repair, mitosis and signal transduction. Covalent attachment to its substrates requires prior activation by the E1 complex sae1-sae2 and linkage to the E2 enzyme ube2i. The sequence is that of Small ubiquitin-related modifier 3-like (sumo3l) from Danio rerio (Zebrafish).